Reading from the N-terminus, the 215-residue chain is Superoxide dismutase [Mn] (215 aa).

Residues His27, His83, Asp170, and His174 each contribute to the Mn(2+) site.

Belongs to the iron/manganese superoxide dismutase family. Homodimer. Mn(2+) serves as cofactor.

The catalysed reaction is 2 superoxide + 2 H(+) = H2O2 + O2. In terms of biological role, destroys superoxide anion radicals which are normally produced within the cells and which are toxic to biological systems. The protein is Superoxide dismutase [Mn] (sodA) of Haemophilus influenzae (strain ATCC 51907 / DSM 11121 / KW20 / Rd).